Here is a 148-residue protein sequence, read N- to C-terminus: Ubiquitin-conjugating enzyme E2 30 (148 aa).

The UBC core domain maps to 1-147; it reads MASKRINKEL…AQSWTQKYAM (147 aa). The Glycyl thioester intermediate role is filled by Cys85.

This sequence belongs to the ubiquitin-conjugating enzyme family. Interacts with RGLG3 and RGLG4. Ubiquitously expressed at very low levels.

The enzyme catalyses S-ubiquitinyl-[E1 ubiquitin-activating enzyme]-L-cysteine + [E2 ubiquitin-conjugating enzyme]-L-cysteine = [E1 ubiquitin-activating enzyme]-L-cysteine + S-ubiquitinyl-[E2 ubiquitin-conjugating enzyme]-L-cysteine.. It participates in protein modification; protein ubiquitination. In terms of biological role, accepts the ubiquitin from the E1 complex and catalyzes its covalent attachment to other proteins. The polypeptide is Ubiquitin-conjugating enzyme E2 30 (UBC30) (Arabidopsis thaliana (Mouse-ear cress)).